The primary structure comprises 590 residues: Shugoshin (590 aa).

Residues 1-20 (MPKRKIAPNKESSRRTVSHD) form a disordered region. The segment covering 11 to 20 (ESSRRTVSHD) has biased composition (basic and acidic residues). Residues 25 to 86 (QIQEFQNLMD…QENVTLRSKT (62 aa)) are a coiled coil. Disordered regions lie at residues 133 to 235 (LRTM…QVEE), 291 to 337 (PSNP…HSMK), and 411 to 550 (RNRE…NSNI). The segment covering 173–185 (SFNKDDGPDLEPK) has biased composition (basic and acidic residues). Over residues 302–326 (PSATLPTTTSDASTVYPSSSSSTNS) the composition is skewed to low complexity. Residues 328–337 (PKTKIKHSMK) are compositionally biased toward basic residues. The segment covering 448 to 459 (KKTEDEIHEDTA) has biased composition (basic and acidic residues). The segment covering 513–526 (IVNNLSDENSTTRP) has biased composition (polar residues). Low complexity predominate over residues 527 to 550 (SKSSKGTSNNNNNYNNFDNNNSNI).

It belongs to the shugoshin family. Post-translationally, ubiquitinated by the anaphase promoting complex (APC) at the onset of anaphase, conducting to its degradation.

The protein resides in the chromosome. It is found in the centromere. Its subcellular location is the kinetochore. It localises to the cytoplasm. The protein localises to the cytoskeleton. The protein resides in the spindle pole. Its function is as follows. Plays a central role in chromosome cohesion during mitosis and meiosis divisions by preventing premature dissociation of cohesin complex from centromeres after prophase, when most of cohesin complex dissociates from chromosomes arms. Probably act by protecting REC8 and RAD21 from separase degradation during anaphase. Also acts as a spindle checkpoint component required for sensing tension between sister chromatids during mitosis, its degradation when they separate preventing cell cycle arrest and chromosome loss in anaphase, a time when sister chromatids are no longer under tension. The chain is Shugoshin (SGO1) from Saccharomyces cerevisiae (strain ATCC 204508 / S288c) (Baker's yeast).